The sequence spans 283 residues: PTS system mannose-specific EIID component (283 aa).

Methionine 1 carries the N-formylmethionine modification. The Cytoplasmic portion of the chain corresponds to 1–14; it reads MVDTTQTTTEKKLT. In terms of domain architecture, PTS EIID spans 11 to 281; it reads KKLTQSDIRG…GIAGYACGLL (271 aa). An intramembrane segment occupies 15 to 52; it reads QSDIRGVFLRSNLFQGSWNFERMQALGFCFSMVPAIRR. The Cytoplasmic portion of the chain corresponds to 53–59; the sequence is LYPENNE. An intramembrane segment occupies 60–92; sequence ARKQAIRRHLEFFNTQPFVAAPILGVTLALEEQ. The Cytoplasmic segment spans residues 93–100; sequence RANGAEID. A membrane pass occupies residues 101–140; sequence DGAINGIKVGLMGPLAGVGDPIFWGTVRPVFAALGAGIAM. Over 141–144 the chain is Periplasmic; the sequence is SGSL. Positions 145 to 173 form a transmembrane segment; it reads LGPLLFFILFNLVRLATRYYGVAYGYSKG. At 174–183 the chain is on the cytoplasmic side; the sequence is IDIVKDMGGG. The segment at 184–209 is a transmembrane helix; the sequence is FLQKLTEGASILGLFVMGALVNKWTH. At 210–241 the chain is on the periplasmic side; that stretch reads VNIPLVVSRITDQTGKEHVTTVQTILDQLMPG. Residues 242-255 are membrane-embedded; that stretch reads LVPLLLTFACMWLL. At 256-261 the chain is on the cytoplasmic side; the sequence is RKKVNP. A membrane pass occupies residues 262 to 280; the sequence is LWIIVGFFVIGIAGYACGL. At 281–283 the chain is on the periplasmic side; the sequence is LGL.

In terms of assembly, homotrimer of protomers that are composed of two subunits, IIC and IID.

The protein localises to the cell inner membrane. The phosphoenolpyruvate-dependent sugar phosphotransferase system (sugar PTS), a major carbohydrate active transport system, catalyzes the phosphorylation of incoming sugar substrates concomitantly with their translocation across the cell membrane. The enzyme II ManXYZ PTS system is involved in mannose transport. The sequence is that of PTS system mannose-specific EIID component (manZ) from Escherichia coli O157:H7.